Here is a 145-residue protein sequence, read N- to C-terminus: MGRFIFVSFGLLVVFVSLSGTGADCPSGWSSYEGHCYKLFNQQSQWAHAEKFCTLQHTGGHLVSFHSTEEADFVVKLAFQNFGHGIFWMGLSNVWNQCSWQWSNAAKLKYEAWAEIYCVYFKSTNNKWRSRACRMEAYFVCEFQA.

The N-terminal stretch at 1-23 is a signal peptide; that stretch reads MGRFIFVSFGLLVVFVSLSGTGA. 3 cysteine pairs are disulfide-bonded: Cys25/Cys36, Cys53/Cys141, and Cys118/Cys133. The C-type lectin domain occupies 32 to 142; it reads YEGHCYKLFN…CRMEAYFVCE (111 aa). Positions 64 and 70 each coordinate Ca(2+). Glu142 serves as a coordination point for Ca(2+).

It belongs to the snaclec family. As to quaternary structure, heterodimer of subunits A and B; disulfide-linked. In terms of tissue distribution, expressed by the venom gland.

The protein localises to the secreted. Inhibits thrombin-induced fibrinogen clotting and factor Xa-induced prothrombin activation. Binds to thrombin and prothrombin exosites. This chain is Snaclec salmorin subunit B, found in Gloydius brevicauda (Korean slamosa snake).